Reading from the N-terminus, the 392-residue chain is Transcription factor GATA-4 (392 aa).

Residues 75–113 (SSAYNPGTSHPPVSPRFTFSSSPPITAPSSREVSYSSPL) are disordered. The span at 91 to 113 (FTFSSSPPITAPSSREVSYSSPL) shows a compositional bias: polar residues. 2 GATA-type zinc fingers span residues 184–208 (CVNC…CNAC) and 238–262 (CANC…CNAC). Disordered regions lie at residues 279 to 339 (KEGI…HSNS) and 359 to 392 (MPSL…LVLA). The span at 284–293 (TRKRKPKNLS) shows a compositional bias: basic residues. The span at 302–316 (SGSDSLTPSTSSTNS) shows a compositional bias: low complexity. A compositionally biased stretch (polar residues) spans 364-380 (LSPQNHHSTFNPSPQAN).

As to expression, expressed at high levels in heart, small intestine, stomach, ovary, and liver. Found at much lower levels in lung, spleen, pancreas and skin.

The protein localises to the nucleus. In terms of biological role, transcriptional activator that binds to the consensus sequence 5'-AGATAG-3'. Associated with cardiac specification and can regulate cardiac-specific transcription during embryogenesis. Activates the expression of cardiac MHC-alpha in vivo. This chain is Transcription factor GATA-4 (gata4), found in Xenopus laevis (African clawed frog).